Here is a 132-residue protein sequence, read N- to C-terminus: Myelin P2 protein (132 aa).

S2 is subject to N-acetylserine. (9Z)-octadecenoate-binding positions include R107 and 127–129 (RIY). Hexadecanoate-binding positions include R107 and 127–129 (RIY).

It belongs to the calycin superfamily. Fatty-acid binding protein (FABP) family. In terms of assembly, monomer.

The protein resides in the cytoplasm. Its function is as follows. May play a role in lipid transport protein in Schwann cells. May bind cholesterol. In Oryctolagus cuniculus (Rabbit), this protein is Myelin P2 protein (PMP2).